The chain runs to 254 residues: Phosphoglycerate mutase 1 (254 aa).

Residues 10–17 (RHGESTWN) and 23–24 (SG) each bind substrate. The active-site Tele-phosphohistidine intermediate is histidine 11. A phosphoserine mark is found at serine 14 and serine 23. Residue tyrosine 26 is modified to Phosphotyrosine. At serine 31 the chain carries Phosphoserine. Substrate contacts are provided by residues arginine 62, 89-92 (ERHY), and lysine 100. Residue glutamate 89 is the Proton donor/acceptor of the active site. Lysine 106 bears the N6-acetyllysine mark. 116–117 (RR) contributes to the substrate binding site. Serine 118 bears the Phosphoserine mark. 187–188 (GN) contributes to the substrate binding site. An N6-acetyllysine; alternate modification is found at lysine 251. Lysine 251 carries the post-translational modification N6-succinyllysine; alternate. N6-acetyllysine occurs at positions 253 and 254.

This sequence belongs to the phosphoglycerate mutase family. BPG-dependent PGAM subfamily. In terms of assembly, homodimer. Acetylated at Lys-253, Lys-253 and Lys-254 under high glucose condition. Acetylation increases catalytic activity. Under glucose restriction SIRT1 levels dramatically increase and it deacetylates the enzyme.

It carries out the reaction (2R)-2-phosphoglycerate = (2R)-3-phosphoglycerate. It catalyses the reaction (2R)-3-phospho-glyceroyl phosphate = (2R)-2,3-bisphosphoglycerate + H(+). Its function is as follows. Catalyzes the interconversion of 2-phosphoglycerate and 3-phosphoglyceratea crucial step in glycolysis, by using 2,3-bisphosphoglycerate. Also catalyzes the interconversion of (2R)-2,3-bisphosphoglycerate and (2R)-3-phospho-glyceroyl phosphate. The sequence is that of Phosphoglycerate mutase 1 from Bos taurus (Bovine).